A 345-amino-acid chain; its full sequence is Holliday junction branch migration complex subunit RuvB (345 aa).

A large ATPase domain (RuvB-L) region spans residues 1–183 (MTTQRLVSAA…FGIVHRLEFY (183 aa)). ATP-binding positions include Ile-22, Arg-23, Gly-64, Lys-67, Thr-68, Thr-69, 130-132 (EDY), Arg-173, Tyr-183, and Arg-220. Thr-68 contacts Mg(2+). Residues 184-254 (SVEELSRIVA…VAGKALEMLD (71 aa)) are small ATPAse domain (RuvB-S). The tract at residues 257 to 345 (PNGFDQSDRR…NVNEELFGDE (89 aa)) is head domain (RuvB-H). Positions 293, 312, and 317 each coordinate DNA.

It belongs to the RuvB family. Homohexamer. Forms an RuvA(8)-RuvB(12)-Holliday junction (HJ) complex. HJ DNA is sandwiched between 2 RuvA tetramers; dsDNA enters through RuvA and exits via RuvB. An RuvB hexamer assembles on each DNA strand where it exits the tetramer. Each RuvB hexamer is contacted by two RuvA subunits (via domain III) on 2 adjacent RuvB subunits; this complex drives branch migration. In the full resolvosome a probable DNA-RuvA(4)-RuvB(12)-RuvC(2) complex forms which resolves the HJ.

It is found in the cytoplasm. The catalysed reaction is ATP + H2O = ADP + phosphate + H(+). The RuvA-RuvB-RuvC complex processes Holliday junction (HJ) DNA during genetic recombination and DNA repair, while the RuvA-RuvB complex plays an important role in the rescue of blocked DNA replication forks via replication fork reversal (RFR). RuvA specifically binds to HJ cruciform DNA, conferring on it an open structure. The RuvB hexamer acts as an ATP-dependent pump, pulling dsDNA into and through the RuvAB complex. RuvB forms 2 homohexamers on either side of HJ DNA bound by 1 or 2 RuvA tetramers; 4 subunits per hexamer contact DNA at a time. Coordinated motions by a converter formed by DNA-disengaged RuvB subunits stimulates ATP hydrolysis and nucleotide exchange. Immobilization of the converter enables RuvB to convert the ATP-contained energy into a lever motion, pulling 2 nucleotides of DNA out of the RuvA tetramer per ATP hydrolyzed, thus driving DNA branch migration. The RuvB motors rotate together with the DNA substrate, which together with the progressing nucleotide cycle form the mechanistic basis for DNA recombination by continuous HJ branch migration. Branch migration allows RuvC to scan DNA until it finds its consensus sequence, where it cleaves and resolves cruciform DNA. The chain is Holliday junction branch migration complex subunit RuvB from Methylococcus capsulatus (strain ATCC 33009 / NCIMB 11132 / Bath).